Reading from the N-terminus, the 371-residue chain is Anhydro-N-acetylmuramic acid kinase (371 aa).

Residue 9 to 16 (GTSMDGID) participates in ATP binding.

The protein belongs to the anhydro-N-acetylmuramic acid kinase family.

The catalysed reaction is 1,6-anhydro-N-acetyl-beta-muramate + ATP + H2O = N-acetyl-D-muramate 6-phosphate + ADP + H(+). It functions in the pathway amino-sugar metabolism; 1,6-anhydro-N-acetylmuramate degradation. It participates in cell wall biogenesis; peptidoglycan recycling. Functionally, catalyzes the specific phosphorylation of 1,6-anhydro-N-acetylmuramic acid (anhMurNAc) with the simultaneous cleavage of the 1,6-anhydro ring, generating MurNAc-6-P. Is required for the utilization of anhMurNAc either imported from the medium or derived from its own cell wall murein, and thus plays a role in cell wall recycling. This Azorhizobium caulinodans (strain ATCC 43989 / DSM 5975 / JCM 20966 / LMG 6465 / NBRC 14845 / NCIMB 13405 / ORS 571) protein is Anhydro-N-acetylmuramic acid kinase.